The sequence spans 183 residues: Nucleoplasmin-like protein NO29 (183 aa).

A compositionally biased stretch (acidic residues) spans 126–166 (SDDEDLSGSEEEMEDEEEEEDDDDDDDDDDDDDDDDDEEEI). Residues 126–183 (SDDEDLSGSEEEMEDEEEEEDDDDDDDDDDDDDDDDDEEEITPIKPAKKPLKTLSRTF) are disordered.

This sequence belongs to the nucleoplasmin family.

It localises to the nucleus. The protein localises to the nucleolus. This Xenopus laevis (African clawed frog) protein is Nucleoplasmin-like protein NO29.